A 273-amino-acid polypeptide reads, in one-letter code: Ribosomal RNA small subunit methyltransferase A (273 aa).

N18, L20, G45, E66, D91, and N113 together coordinate S-adenosyl-L-methionine.

The protein belongs to the class I-like SAM-binding methyltransferase superfamily. rRNA adenine N(6)-methyltransferase family. RsmA subfamily.

Its subcellular location is the cytoplasm. It carries out the reaction adenosine(1518)/adenosine(1519) in 16S rRNA + 4 S-adenosyl-L-methionine = N(6)-dimethyladenosine(1518)/N(6)-dimethyladenosine(1519) in 16S rRNA + 4 S-adenosyl-L-homocysteine + 4 H(+). Specifically dimethylates two adjacent adenosines (A1518 and A1519) in the loop of a conserved hairpin near the 3'-end of 16S rRNA in the 30S particle. May play a critical role in biogenesis of 30S subunits. The chain is Ribosomal RNA small subunit methyltransferase A from Shigella flexneri.